The chain runs to 698 residues: Elongation factor G (698 aa).

The tr-type G domain occupies 10-285 (DKTRNIGIMA…AVVDYLPSPL (276 aa)). GTP contacts are provided by residues 19–26 (AHIDAGKT), 83–87 (DTPGH), and 137–140 (NKMD).

Belongs to the TRAFAC class translation factor GTPase superfamily. Classic translation factor GTPase family. EF-G/EF-2 subfamily.

Its subcellular location is the cytoplasm. Catalyzes the GTP-dependent ribosomal translocation step during translation elongation. During this step, the ribosome changes from the pre-translocational (PRE) to the post-translocational (POST) state as the newly formed A-site-bound peptidyl-tRNA and P-site-bound deacylated tRNA move to the P and E sites, respectively. Catalyzes the coordinated movement of the two tRNA molecules, the mRNA and conformational changes in the ribosome. The chain is Elongation factor G from Lactiplantibacillus plantarum (strain ATCC BAA-793 / NCIMB 8826 / WCFS1) (Lactobacillus plantarum).